A 121-amino-acid chain; its full sequence is Small ribosomal subunit protein uS12 (121 aa).

The tract at residues 1 to 25 is disordered; that stretch reads MPTINQLVRKNRKQKKSQSKSPVLE. Basic residues predominate over residues 9 to 18; the sequence is RKNRKQKKSQ. Residue Asp-89 is modified to 3-methylthioaspartic acid.

It belongs to the universal ribosomal protein uS12 family. Part of the 30S ribosomal subunit. Contacts proteins S8 and S17. May interact with IF1 in the 30S initiation complex.

In terms of biological role, with S4 and S5 plays an important role in translational accuracy. Interacts with and stabilizes bases of the 16S rRNA that are involved in tRNA selection in the A site and with the mRNA backbone. Located at the interface of the 30S and 50S subunits, it traverses the body of the 30S subunit contacting proteins on the other side and probably holding the rRNA structure together. The combined cluster of proteins S8, S12 and S17 appears to hold together the shoulder and platform of the 30S subunit. The chain is Small ribosomal subunit protein uS12 from Rhodopirellula baltica (strain DSM 10527 / NCIMB 13988 / SH1).